Reading from the N-terminus, the 460-residue chain is Inactive 7-epi-sesquithujene synthase (460 aa).

D308 and D312 together coordinate Mg(2+). Residues D308 and D312 each contribute to the substrate site. The short motif at 308–312 (DDMFD) is the DDXXD motif element.

It belongs to the terpene synthase family. As to quaternary structure, monomer. The cofactor is Mg(2+). Mn(2+) is required as a cofactor.

The protein localises to the cytoplasm. Its pathway is secondary metabolite biosynthesis; terpenoid biosynthesis. In terms of biological role, non-functional sesquiterpene synthase due to a frameshift removing part of the catalytic site. This chain is Inactive 7-epi-sesquithujene synthase, found in Zea mays (Maize).